The sequence spans 221 residues: Tetraspanin-2 (221 aa).

The Cytoplasmic segment spans residues 1–13 (MGRFRGGLRCIKY). A helical transmembrane segment spans residues 14-34 (LLLGFNLLFWLAGSAVIAFGL). The Extracellular portion of the chain corresponds to 35 to 54 (WFRFGGTMKDLSSEDKSPEY). The helical transmembrane segment at 55 to 75 (FYVGLYVLVGAGALMMTVGFF) threads the bilayer. Residues 76-90 (GCCGAMRESQCVLGS) lie on the Cytoplasmic side of the membrane. Residues 91-111 (FFTCLLVIFAAEVTTGVFAFI) form a helical membrane-spanning segment. Residues 112–188 (GKDVAIRHVQ…ETVISAKLQL (77 aa)) lie on the Extracellular side of the membrane. A glycan (N-linked (GlcNAc...) asparagine) is linked at Asn-139. A helical membrane pass occupies residues 189-209 (IGIVGIGIAGLTIFGMIFSMV). Residues 210 to 221 (LCCAIRNSRDVI) are Cytoplasmic-facing.

Belongs to the tetraspanin (TM4SF) family.

Its subcellular location is the membrane. Functionally, may play a role in signalling in oligodendrocytes in the early stages of their terminal differentiation into myelin-forming glia and may also function in stabilizing the mature sheath. The chain is Tetraspanin-2 (Tspan2) from Mus musculus (Mouse).